The following is a 110-amino-acid chain: Putative protein RIG (110 aa).

As to expression, expressed predominantly in brain and weakly in heart and lung. Expression is reduced or undetectable in cultured glioma cells, primary glioblastoma cells and malignant glioblastoma tumors.

May serve as a molecular marker for or play a role in the malignant progression of glioblastomas. In Homo sapiens (Human), this protein is Putative protein RIG (RIG).